Reading from the N-terminus, the 535-residue chain is Mannan polymerase I complex VAN1 subunit (535 aa).

The Cytoplasmic segment spans residues 1-64 (MGMFFNLRSN…STPSKFQLTV (64 aa)). The tract at residues 22 to 48 (LPISRNGSSNNIKDKRSEHNSNSLKGK) is disordered. Serine 25 carries the post-translational modification Phosphoserine. The helical; Signal-anchor for type II membrane protein transmembrane segment at 65 to 81 (SITSLIIIAVLSLYLFI) threads the bilayer. Residues 82-535 (SFLSGMGIGV…REREKRRQSE (454 aa)) are Lumenal-facing. N-linked (GlcNAc...) asparagine glycosylation is found at asparagine 215 and asparagine 251.

Belongs to the ANP1/MMN9/VAN1 family. Component of the M-Pol I complex which contains MNN9 and VAN1. Glycosylated.

Its subcellular location is the endoplasmic reticulum membrane. It localises to the golgi apparatus membrane. In terms of biological role, involved in regulation of the phosphorylation of a number of proteins, some of which appear to be important in cell growth control. Its function is as follows. The M-Pol I complex possesses alpha-1,6-mannosyltransferase activity and is probably involved in the elongation of the mannan backbone of N-linked glycans on cell wall and periplasmic proteins. This chain is Mannan polymerase I complex VAN1 subunit (VAN1), found in Saccharomyces cerevisiae (strain ATCC 204508 / S288c) (Baker's yeast).